We begin with the raw amino-acid sequence, 372 residues long: MTSIEPTHTGKKVIVGMSGGVDSSVSAYLLMQQGYQVEGLFMKNWEEDDNNEYCAAAEDLKDAQAVCDKLGIKLHTVNFAAEYWDNVFEYFLAEYKAGRTPNPDIMCNKEIKFKAFLEFADEILDADYIAMGHYVRRRDNSDGSTQMLRGVDGNKDQSYFLYTLSHEQVARSLFPVGELEKHQVREIAKEMGLITHDKKDSTGICFIGERKFTEFLGTYLPAQPGNIETPEGEVIGTHQGLMYHTLGQRKGLGIGGMKNSNDDPWYVVDKDLERNVLIVGQGGHHPRLMSNGMTVNQLHWVDRTGPVDGCHITVKTRYRQQDVPCTLTYTDEHTLRVVFDEPVAAVTPGQSVVFYDGEVCLGGGIIDQLIRG.

ATP-binding positions include 16–23 (GMSGGVDS) and Met42. An interaction with target base in tRNA region spans residues 102–104 (NPD). Residue Cys107 is the Nucleophile of the active site. Cys107 and Cys205 form a disulfide bridge. Gly132 contacts ATP. The segment at 155 to 157 (KDQ) is interaction with tRNA. Cys205 functions as the Cysteine persulfide intermediate in the catalytic mechanism. The segment at 317–318 (RY) is interaction with tRNA.

It belongs to the MnmA/TRMU family.

Its subcellular location is the cytoplasm. The enzyme catalyses S-sulfanyl-L-cysteinyl-[protein] + uridine(34) in tRNA + AH2 + ATP = 2-thiouridine(34) in tRNA + L-cysteinyl-[protein] + A + AMP + diphosphate + H(+). Catalyzes the 2-thiolation of uridine at the wobble position (U34) of tRNA, leading to the formation of s(2)U34. This is tRNA-specific 2-thiouridylase MnmA from Shewanella sp. (strain W3-18-1).